The following is a 468-amino-acid chain: Probable protein phosphatase 2C 52 (468 aa).

One can recognise a PPM-type phosphatase domain in the interval 67–372 (SSCIFTQQGR…DDCAVVCLFL (306 aa)). The Mn(2+) site is built by Asp102, Gly103, Asp317, and Asp363. Positions 413–429 (RSSSDQENETYGNVNTE) are enriched in polar residues. A disordered region spans residues 413 to 442 (RSSSDQENETYGNVNTETDAEDEKTVGDQN).

It belongs to the PP2C family. Mg(2+) is required as a cofactor. The cofactor is Mn(2+).

It catalyses the reaction O-phospho-L-seryl-[protein] + H2O = L-seryl-[protein] + phosphate. It carries out the reaction O-phospho-L-threonyl-[protein] + H2O = L-threonyl-[protein] + phosphate. The polypeptide is Probable protein phosphatase 2C 52 (Arabidopsis thaliana (Mouse-ear cress)).